The sequence spans 262 residues: MSDDNRIESMAARLREAQSSRQTIAPLREACPEGDATLAYAIQQVNNDLRAANGERLVGRKIGLTSPAVQKQLGVGQPDFGALFASMAYGDSQPMPLASLVQPKVEAEIALVLERDLTAEKNTFADLIGATAYALAAIEVVDSRIRDWDIRFFDTVADNASSALFVLGSRPVLLRDIDLTACAMTLTQDGEILSRGNGTACLGNPLNAAAWLADRMVRLGTPLRAGDIVLTGALGPMVAVKAAGTYTAHIEGLGSVRASFSE.

Belongs to the hydratase/decarboxylase family. MhpD subfamily. A divalent metal cation serves as cofactor.

It carries out the reaction (S)-4-hydroxy-2-oxopentanoate = (2Z)-2-hydroxypenta-2,4-dienoate + H2O. It functions in the pathway aromatic compound metabolism; 3-phenylpropanoate degradation. Catalyzes the conversion of 2-hydroxypentadienoic acid (enolic form of 2-oxopent-4-enoate) to 4-hydroxy-2-ketopentanoic acid. In Paraburkholderia phymatum (strain DSM 17167 / CIP 108236 / LMG 21445 / STM815) (Burkholderia phymatum), this protein is 2-keto-4-pentenoate hydratase.